Consider the following 497-residue polypeptide: Glycerol kinase (497 aa).

An ADP-binding site is contributed by Thr-13. Thr-13, Thr-14, and Ser-15 together coordinate ATP. Thr-13 lines the sn-glycerol 3-phosphate pocket. Arg-17 contacts ADP. Sn-glycerol 3-phosphate-binding residues include Arg-83, Glu-84, and Tyr-135. Glycerol-binding residues include Arg-83, Glu-84, and Tyr-135. His-231 bears the Phosphohistidine; by HPr mark. Asp-245 lines the sn-glycerol 3-phosphate pocket. Residues Asp-245 and Gln-246 each contribute to the glycerol site. Positions 267 and 310 each coordinate ADP. Residues Thr-267, Gly-310, Gln-314, and Gly-411 each contribute to the ATP site. Positions 411 and 415 each coordinate ADP.

This sequence belongs to the FGGY kinase family. Homotetramer and homodimer (in equilibrium). The phosphoenolpyruvate-dependent sugar phosphotransferase system (PTS), including enzyme I, and histidine-containing protein (HPr) are required for the phosphorylation, which leads to the activation of the enzyme.

It catalyses the reaction glycerol + ATP = sn-glycerol 3-phosphate + ADP + H(+). It functions in the pathway polyol metabolism; glycerol degradation via glycerol kinase pathway; sn-glycerol 3-phosphate from glycerol: step 1/1. Activated by phosphorylation and inhibited by fructose 1,6-bisphosphate (FBP). Its function is as follows. Key enzyme in the regulation of glycerol uptake and metabolism. Catalyzes the phosphorylation of glycerol to yield sn-glycerol 3-phosphate. The chain is Glycerol kinase from Listeria monocytogenes serotype 4b (strain F2365).